The chain runs to 289 residues: Proteasome subunit beta (289 aa).

A propeptide spans 1 to 55 (MTWPLPDRLSINSAISGSAVDLSSFAEFLRRQAPELLPASIKHGGGAVGDQLPHA) (removed in mature form; by autocatalysis). The active-site Nucleophile is Thr56.

Belongs to the peptidase T1B family. The 20S proteasome core is composed of 14 alpha and 14 beta subunits that assemble into four stacked heptameric rings, resulting in a barrel-shaped structure. The two inner rings, each composed of seven catalytic beta subunits, are sandwiched by two outer rings, each composed of seven alpha subunits. The catalytic chamber with the active sites is on the inside of the barrel. Has a gated structure, the ends of the cylinder being occluded by the N-termini of the alpha-subunits. Is capped by the proteasome-associated ATPase, ARC.

Its subcellular location is the cytoplasm. It carries out the reaction Cleavage of peptide bonds with very broad specificity.. It participates in protein degradation; proteasomal Pup-dependent pathway. With respect to regulation, the formation of the proteasomal ATPase ARC-20S proteasome complex, likely via the docking of the C-termini of ARC into the intersubunit pockets in the alpha-rings, may trigger opening of the gate for substrate entry. Interconversion between the open-gate and close-gate conformations leads to a dynamic regulation of the 20S proteasome proteolysis activity. Component of the proteasome core, a large protease complex with broad specificity involved in protein degradation. This Mycobacterium marinum (strain ATCC BAA-535 / M) protein is Proteasome subunit beta.